A 140-amino-acid chain; its full sequence is Photosystem I reaction center subunit XI (140 aa).

A run of 3 helical transmembrane segments spans residues 48–68 (LEIG…LGPL), 79–99 (LLSA…YGAV), and 119–139 (SGFL…LTLF).

It belongs to the PsaL family.

It is found in the plastid. The protein localises to the chloroplast thylakoid membrane. The protein is Photosystem I reaction center subunit XI of Cyanidioschyzon merolae (strain NIES-3377 / 10D) (Unicellular red alga).